A 303-amino-acid chain; its full sequence is Recombination-associated protein RdgC (303 aa).

It belongs to the RdgC family.

It localises to the cytoplasm. Its subcellular location is the nucleoid. Its function is as follows. May be involved in recombination. The polypeptide is Recombination-associated protein RdgC (Pseudoalteromonas translucida (strain TAC 125)).